We begin with the raw amino-acid sequence, 160 residues long: Transcription elongation factor GreA (160 aa).

Residues 53–73 (AREEQGMVEARIRDIEGRLQN) are a coiled coil.

Belongs to the GreA/GreB family.

Its function is as follows. Necessary for efficient RNA polymerase transcription elongation past template-encoded arresting sites. The arresting sites in DNA have the property of trapping a certain fraction of elongating RNA polymerases that pass through, resulting in locked ternary complexes. Cleavage of the nascent transcript by cleavage factors such as GreA or GreB allows the resumption of elongation from the new 3'terminus. GreA releases sequences of 2 to 3 nucleotides. This chain is Transcription elongation factor GreA, found in Pseudomonas putida (strain ATCC 47054 / DSM 6125 / CFBP 8728 / NCIMB 11950 / KT2440).